Here is a 180-residue protein sequence, read N- to C-terminus: Non-specific lipid transfer protein GPI-anchored 3 (180 aa).

Positions 1 to 22 (MEAVRFAVAVVLVFCYVTSSNA) are cleaved as a signal peptide. Disulfide bonds link Cys-41-Cys-78, Cys-48-Cys-62, Cys-63-Cys-104, and Cys-76-Cys-113. 2 N-linked (GlcNAc...) asparagine glycosylation sites follow: Asn-91 and Asn-120. Low complexity-rich tracts occupy residues 116–125 (SAGTNSSSTP) and 133–156 (PASSTSTGTGSGSTGNAAPSTAKP). Residues 116–156 (SAGTNSSSTPPATPKTPPASSTSTGTGSGSTGNAAPSTAKP) form a disordered region. Ser-158 carries the GPI-anchor amidated serine lipid modification. The propeptide at 159 to 180 (SAPAINFGGLSFASAVVATLFF) is removed in mature form.

It belongs to the plant LTP family. As to expression, restricted to stamen, pollen and sporophytic tissues. Also detected, at low levels, in stems and leaves.

Its subcellular location is the cell membrane. Its function is as follows. Lipid transfer protein involved in seed and ovule maturation and development, probably by regulating the fatty acids homeostasis during suberin and sporopollenin biosynthesis or deposition. The protein is Non-specific lipid transfer protein GPI-anchored 3 of Arabidopsis thaliana (Mouse-ear cress).